Here is a 102-residue protein sequence, read N- to C-terminus: Acid shock protein (102 aa).

The N-terminal stretch at 1–21 (MKKVLALVVAAAMGLSSAAFA) is a signal peptide. Over residues 21-41 (AAETTTTPAPTATTTKAAPAK) the composition is skewed to low complexity. The tract at residues 21–102 (AAETTTTPAP…PAKPAAQPAA (82 aa)) is disordered. Positions 22-58 (AETTTTPAPTATTTKAAPAKTTHHKKQHKAAPAQKAQ) are excised as a propeptide. Basic residues predominate over residues 80-90 (AAKKHAKKHSH). The span at 91–102 (QQPAKPAAQPAA) shows a compositional bias: low complexity.

Belongs to the Asr family. In terms of processing, proteolytic processing gives rise to the active protein.

It is found in the periplasm. Its function is as follows. Required for growth and/or survival at acidic conditions. This is Acid shock protein from Escherichia coli (strain K12 / MC4100 / BW2952).